The sequence spans 358 residues: DNA integrity scanning protein DisA (358 aa).

The 139-residue stretch at 6–144 (RPTLREAVAR…RGERHVLTDS (139 aa)) folds into the DAC domain. ATP is bound by residues Gly-73, Leu-91, and 104 to 108 (TRHRS).

The protein belongs to the DisA family. As to quaternary structure, homooctamer. Mg(2+) serves as cofactor.

It carries out the reaction 2 ATP = 3',3'-c-di-AMP + 2 diphosphate. In terms of biological role, participates in a DNA-damage check-point. DisA forms globular foci that rapidly scan along the chromosomes searching for lesions. Functionally, also has diadenylate cyclase activity, catalyzing the condensation of 2 ATP molecules into cyclic di-AMP (c-di-AMP). c-di-AMP likely acts as a signaling molecule that may couple DNA integrity with a cellular process. This is DNA integrity scanning protein DisA from Mycobacterium tuberculosis (strain ATCC 25177 / H37Ra).